Reading from the N-terminus, the 469-residue chain is Dynein axonemal assembly factor 3 (469 aa).

The tract at residues 313–356 (RSPLNEDPPNTSSSCCQSTESRKTEENSQSDPSASQTQPVEHSP) is disordered. Composition is skewed to polar residues over residues 320–331 (PPNTSSSCCQST) and 339–356 (NSQS…EHSP).

It belongs to the DNAAF3 family. Mainly expressed in cell types that express axonemal dyneins.

It is found in the cytoplasm. Its subcellular location is the dynein axonemal particle. In terms of biological role, required for the assembly of axonemal inner and outer dynein arms. Involved in preassembly of dyneins into complexes before their transport into cilia. The chain is Dynein axonemal assembly factor 3 (dnaaf3) from Danio rerio (Zebrafish).